A 109-amino-acid polypeptide reads, in one-letter code: uncharacterized protein (109 aa).

Residues 12–32 traverse the membrane as a helical segment; sequence PNILIKGVYIFVLYGMCICIV.

The protein localises to the membrane. This is an uncharacterized protein from Saccharomyces cerevisiae (strain ATCC 204508 / S288c) (Baker's yeast).